We begin with the raw amino-acid sequence, 157 residues long: Protein E6 (157 aa).

Zinc fingers lie at residues 43–80 (CRFC…CSGC) and 117–153 (CQYC…CRHC).

It belongs to the papillomaviridae E6 protein family. In terms of assembly, forms homodimers. Interacts with ubiquitin-protein ligase UBE3A/E6-AP; this interaction stimulates UBE3A ubiquitin activity. Interacts with host BAK1.

It is found in the host cytoplasm. Its subcellular location is the host nucleus. In terms of biological role, plays a major role in the induction and maintenance of cellular transformation. E6 associates with host UBE3A/E6-AP ubiquitin-protein ligase and modulates its activity. Protects host keratinocytes from apoptosis by mediating the degradation of host BAK1. May also inhibit host immune response. This chain is Protein E6, found in Human papillomavirus 23.